The following is an 88-amino-acid chain: Putative membrane protein insertion efficiency factor (88 aa).

It belongs to the UPF0161 family.

The protein localises to the cell inner membrane. Its function is as follows. Could be involved in insertion of integral membrane proteins into the membrane. The sequence is that of Putative membrane protein insertion efficiency factor from Synechococcus sp. (strain CC9311).